The sequence spans 150 residues: MTTFLIKHKASGKFLHPKGGSSNPANDTNLVLHSDIHERMYFQFDVVDERWGYIKHAASGKIVHPLGGKADPPNETKLVLHQDRHDRALFAMDFFNDNIIHKAGKYVHPKGGSTNPPNETLTVMHGDKHGAMEFIFVSPKNKDKRVLVYV.

The D-galactose site is built by His16 and Gly19. Residue Asn26 is glycosylated (N-linked (GlcNAc...) asparagine). D-galactose contacts are provided by residues Asp27, 35 to 37, His64, and Gly67; that span reads DIH. Asn74 carries N-linked (GlcNAc...) asparagine glycosylation. D-galactose contacts are provided by residues Glu75, 83 to 85, His108, and Gly111; that span reads DRH. Residue Asn118 is glycosylated (N-linked (GlcNAc...) asparagine). D-galactose contacts are provided by residues Glu119 and 127 to 129; that span reads DKH.

Homodimer. Likely to form large oligomers; oligomerization enhances hemagglutination activity. In terms of processing, glycosylated.

Its activity is regulated as follows. Hemagglutination activity is not dependent on divalent cations. Hemagglutination activity is highly inhibited by D-galactose and N-acetyl-D-galactosamine, and to a lesser extent by raffinose. Also inhibited by melibiose and alpha-lactose, but not by beta-lactose or D-glucose. D-galactose-binding lectin. Also binds N-acetyl-D-galactosamine. Has hemagglutination activity towards all types of human erythrocytes (O, A and B) and rabbit erythrocytes. Agglutinates Gram-negative and Gram-positive bacteria including E.coli DH5-alpha and L.plantarum ATCC8014, respectively, and has bacteriostatic activity against them. Also agglutinates M.lysodeikticus. May be involved in innate immunity by recognizing and eliminating pathogens. This chain is Galactose-binding lectin, found in Mytilus californianus (California mussel).